Consider the following 141-residue polypeptide: Large ribosomal subunit protein bL17 (141 aa).

This sequence belongs to the bacterial ribosomal protein bL17 family. Part of the 50S ribosomal subunit. Contacts protein L32.

The chain is Large ribosomal subunit protein bL17 from Sinorhizobium medicae (strain WSM419) (Ensifer medicae).